We begin with the raw amino-acid sequence, 284 residues long: Tropomyosin Per a 7.0103 (284 aa).

The stretch at 1-266 (MDAIKKKMQA…EDELVHEKEK (266 aa)) forms a coiled coil.

The protein belongs to the tropomyosin family. In terms of assembly, homodimer.

Its function is as follows. Tropomyosin, in association with the troponin complex, plays a central role in the calcium dependent regulation of muscle contraction. This is Tropomyosin Per a 7.0103 from Periplaneta americana (American cockroach).